A 265-amino-acid chain; its full sequence is Pyridoxine 5'-phosphate synthase (265 aa).

Asparagine 6 is a binding site for 3-amino-2-oxopropyl phosphate. 8–9 provides a ligand contact to 1-deoxy-D-xylulose 5-phosphate; it reads DH. Arginine 17 contacts 3-amino-2-oxopropyl phosphate. Catalysis depends on histidine 42, which acts as the Proton acceptor. 1-deoxy-D-xylulose 5-phosphate contacts are provided by arginine 44 and histidine 49. Glutamate 69 (proton acceptor) is an active-site residue. Threonine 99 contacts 1-deoxy-D-xylulose 5-phosphate. Residue histidine 213 is the Proton donor of the active site. 3-amino-2-oxopropyl phosphate is bound by residues glycine 214 and 235–236; that span reads GQ.

It belongs to the PNP synthase family. As to quaternary structure, homooctamer; tetramer of dimers.

It is found in the cytoplasm. It catalyses the reaction 3-amino-2-oxopropyl phosphate + 1-deoxy-D-xylulose 5-phosphate = pyridoxine 5'-phosphate + phosphate + 2 H2O + H(+). Its pathway is cofactor biosynthesis; pyridoxine 5'-phosphate biosynthesis; pyridoxine 5'-phosphate from D-erythrose 4-phosphate: step 5/5. Functionally, catalyzes the complicated ring closure reaction between the two acyclic compounds 1-deoxy-D-xylulose-5-phosphate (DXP) and 3-amino-2-oxopropyl phosphate (1-amino-acetone-3-phosphate or AAP) to form pyridoxine 5'-phosphate (PNP) and inorganic phosphate. The sequence is that of Pyridoxine 5'-phosphate synthase from Nitratiruptor sp. (strain SB155-2).